Reading from the N-terminus, the 1104-residue chain is Nitrite reductase [NAD(P)H] (1104 aa).

An FAD-binding site is contributed by 44 to 79 (QKIVVVGLGMVAVAFIEKLVKLDSERRKYDIVVIGE). Residue 146–176 (YDILVLATGSDAVLPTSTPGHDAKGIFVYRT) participates in NAD(+) binding. The interval 396–419 (KFLPGQRPSAESIGAADPNREEEP) is disordered. [2Fe-2S] cluster-binding residues include cysteine 500, cysteine 502, cysteine 535, and cysteine 538. [4Fe-4S] cluster is bound by residues cysteine 720, cysteine 726, cysteine 760, and cysteine 764. Position 764 (cysteine 764) interacts with siroheme. A Rieske domain is found at 932-1040 (WQPVIKADYF…VEEREDGWIY (109 aa)). The [2Fe-2S] cluster site is built by cysteine 976, histidine 978, cysteine 1001, and histidine 1004. Positions 1081 to 1104 (GKRAGAKGIEGSKPTRSPSNTIDW) are disordered. The span at 1094-1104 (PTRSPSNTIDW) shows a compositional bias: polar residues.

The protein belongs to the nitrite and sulfite reductase 4Fe-4S domain family. Homodimer. Siroheme is required as a cofactor. [4Fe-4S] cluster serves as cofactor. Requires FAD as cofactor. The cofactor is [2Fe-2S] cluster.

It carries out the reaction NH4(+) + 3 NADP(+) + 2 H2O = nitrite + 3 NADPH + 5 H(+). It catalyses the reaction NH4(+) + 3 NAD(+) + 2 H2O = nitrite + 3 NADH + 5 H(+). Its pathway is nitrogen metabolism; nitrate reduction (assimilation). The chain is Nitrite reductase [NAD(P)H] (niiA) from Emericella nidulans (strain FGSC A4 / ATCC 38163 / CBS 112.46 / NRRL 194 / M139) (Aspergillus nidulans).